The primary structure comprises 447 residues: Argininosuccinate synthase (447 aa).

Residues 17-25 and Ala43 each bind ATP; that span reads AFSGGLDTS. Tyr99 provides a ligand contact to L-citrulline. ATP-binding residues include Gly129 and Thr131. L-aspartate contacts are provided by Thr131, Asn135, and Asp136. Residue Asn135 coordinates L-citrulline. Asp136 is a binding site for ATP. Residues Arg139 and Ser192 each contribute to the L-citrulline site. Asp194 is a binding site for ATP. Residues Thr201, Glu203, and Glu280 each contribute to the L-citrulline site.

This sequence belongs to the argininosuccinate synthase family. Type 2 subfamily. As to quaternary structure, homotetramer.

Its subcellular location is the cytoplasm. The enzyme catalyses L-citrulline + L-aspartate + ATP = 2-(N(omega)-L-arginino)succinate + AMP + diphosphate + H(+). It participates in amino-acid biosynthesis; L-arginine biosynthesis; L-arginine from L-ornithine and carbamoyl phosphate: step 2/3. The protein is Argininosuccinate synthase of Escherichia coli (strain K12 / MC4100 / BW2952).